The sequence spans 694 residues: Elongation factor G 2 (694 aa).

One can recognise a tr-type G domain in the interval 6 to 282 (SKLRNIGISA…GVVDYLPDPT (277 aa)). GTP is bound by residues 15–22 (AHIDSGKT), 82–86 (DTPGH), and 136–139 (NKCD).

Belongs to the TRAFAC class translation factor GTPase superfamily. Classic translation factor GTPase family. EF-G/EF-2 subfamily.

It localises to the cytoplasm. Catalyzes the GTP-dependent ribosomal translocation step during translation elongation. During this step, the ribosome changes from the pre-translocational (PRE) to the post-translocational (POST) state as the newly formed A-site-bound peptidyl-tRNA and P-site-bound deacylated tRNA move to the P and E sites, respectively. Catalyzes the coordinated movement of the two tRNA molecules, the mRNA and conformational changes in the ribosome. This chain is Elongation factor G 2, found in Anaeromyxobacter dehalogenans (strain 2CP-C).